The sequence spans 195 residues: Heavy metal-associated isoprenylated plant protein 18 (195 aa).

Disordered regions lie at residues 36–76 and 145–172; these read DVVQ…KPET and EKEK…NPSS. 2 stretches are compositionally biased toward basic and acidic residues: residues 47–76 and 145–157; these read TVTK…KPET and EKEK…ITKD. The HMA domain occupies 78 to 149; sequence TRKLEIHIAF…RIVKMEKEKK (72 aa). Position 192 is a cysteine methyl ester (C192). The S-farnesyl cysteine moiety is linked to residue C192. Residues 193-195 constitute a propeptide, removed in mature form; it reads SIS.

The protein belongs to the HIPP family.

Its function is as follows. Probable heavy-metal-binding protein. Required for female gametophyte development and function. This is Heavy metal-associated isoprenylated plant protein 18 from Arabidopsis thaliana (Mouse-ear cress).